Here is a 235-residue protein sequence, read N- to C-terminus: Sperm-associated microtubule inner protein 5 (235 aa).

Microtubule inner protein component of sperm flagellar doublet microtubules. As to expression, expressed in sperm.

Its subcellular location is the cytoplasm. The protein resides in the cytoskeleton. It is found in the flagellum axoneme. It localises to the nucleus. Microtubule inner protein (MIP) part of the dynein-decorated doublet microtubules (DMTs) in flagellum axoneme. May serve to reinforce and thus stabilize the microtubule structure in the sperm flagella. This chain is Sperm-associated microtubule inner protein 5 (SPMIP5), found in Bos taurus (Bovine).